Consider the following 512-residue polypeptide: Serine--tRNA ligase, cytoplasmic (512 aa).

At Met1 the chain carries N-acetylmethionine. Positions 9 to 61 (RVDKGGDPALIRETQEKRFKDPGLVDQLVKADSEWRRCRFRADNLNKLKNLCS) are interaction with tRNA. A Phosphoserine modification is found at Ser241. 2 residues coordinate L-serine: Thr271 and Arg302. Residues 302-304 (RQE) and 318-321 (VHQF) contribute to the ATP site. Lys323 carries the N6-acetyllysine modification. Glu325 serves as a coordination point for L-serine. Position 391-394 (391-394 (ELVS)) interacts with ATP. L-serine-binding residues include Asn427 and Thr429. A disordered region spans residues 472–512 (KPAPIDQEPSKKQKKQHEGSKKKAKEVTLESQLQNMEVTEA). Basic and acidic residues predominate over residues 479 to 499 (EPSKKQKKQHEGSKKKAKEVT). The Nuclear localization signal motif lies at 482-494 (KKQKKQHEGSKKK). Over residues 500–512 (LESQLQNMEVTEA) the composition is skewed to polar residues.

The protein belongs to the class-II aminoacyl-tRNA synthetase family. Type-1 seryl-tRNA synthetase subfamily. As to quaternary structure, homodimer. The tRNA molecule may bind across the dimer. Interacts with SIRT2. Interacts with METTL6; interaction is required for the tRNA N(3)-methylcytidine methyltransferase activity of METTL6.

The protein localises to the cytoplasm. It is found in the nucleus. The catalysed reaction is tRNA(Ser) + L-serine + ATP = L-seryl-tRNA(Ser) + AMP + diphosphate + H(+). It carries out the reaction tRNA(Sec) + L-serine + ATP = L-seryl-tRNA(Sec) + AMP + diphosphate + H(+). It functions in the pathway aminoacyl-tRNA biosynthesis; selenocysteinyl-tRNA(Sec) biosynthesis; L-seryl-tRNA(Sec) from L-serine and tRNA(Sec): step 1/1. In terms of biological role, catalyzes the attachment of serine to tRNA(Ser) in a two-step reaction: serine is first activated by ATP to form Ser-AMP and then transferred to the acceptor end of tRNA(Ser). Is probably also able to aminoacylate tRNA(Sec) with serine, to form the misacylated tRNA L-seryl-tRNA(Sec), which will be further converted into selenocysteinyl-tRNA(Sec). In the nucleus, binds to the VEGFA core promoter and prevents MYC binding and transcriptional activation by MYC. Recruits SIRT2 to the VEGFA promoter, promoting deacetylation of histone H4 at 'Lys-16' (H4K16). Thereby, inhibits the production of VEGFA and sprouting angiogenesis mediated by VEGFA. This Cricetulus griseus (Chinese hamster) protein is Serine--tRNA ligase, cytoplasmic (SARS1).